The primary structure comprises 391 residues: GDP-mannose transporter (391 aa).

Residues M1–M11 are compositionally biased toward basic and acidic residues. The disordered stretch occupies residues M1–S28. Topologically, residues M1 to N44 are cytoplasmic. A helical membrane pass occupies residues V45–V65. The Lumenal segment spans residues T66 to N75. A helical transmembrane segment spans residues W76–I96. Topologically, residues C97 to K115 are cytoplasmic. Residues T116–L138 form a helical membrane-spanning segment. Topologically, residues S139 to P141 are lumenal. A helical transmembrane segment spans residues V142–G164. At S165–A170 the chain is on the cytoplasmic side. A helical transmembrane segment spans residues L171–L193. The Lumenal segment spans residues Y194–S209. The helical transmembrane segment at T210–L230 threads the bilayer. Residues S231–D245 lie on the Cytoplasmic side of the membrane. Residues T246–E266 traverse the membrane as a helical segment. N267 and N272 each carry an N-linked (GlcNAc...) asparagine glycan. Over N267–N284 the chain is Lumenal. The chain crosses the membrane as a helical span at residues L285 to W305. Over C306 to T313 the chain is Cytoplasmic. A helical membrane pass occupies residues T314–A336. At P337–T339 the chain is on the lumenal side. Residues F340–A359 traverse the membrane as a helical segment. At K360–A391 the chain is on the cytoplasmic side. Residues S369–A391 are disordered.

The protein belongs to the TPT transporter family. SLC35D subfamily. Homooligomer.

The protein localises to the golgi apparatus membrane. Its subcellular location is the cytoplasmic vesicle membrane. It localises to the endoplasmic reticulum membrane. Involved in the import of GDP-mannose from the cytoplasm into the Golgi lumen. The chain is GDP-mannose transporter (vrg4) from Sclerotinia sclerotiorum (strain ATCC 18683 / 1980 / Ss-1) (White mold).